We begin with the raw amino-acid sequence, 342 residues long: Signaling lymphocytic activation molecule (342 aa).

Positions 1 to 26 (MDSRGFLSLRCLLVLALASKLSCGTG) are cleaved as a signal peptide. The Extracellular segment spans residues 27–237 (ESLMNCPEVP…CRPESSVPRQ (211 aa)). The 110-residue stretch at 29–138 (LMNCPEVPGK…QHFCLQLKLY (110 aa)) folds into the Ig-like V-type domain. Residues Asn-57, Asn-102, Asn-125, Asn-150, Asn-157, Asn-189, and Asn-217 are each glycosylated (N-linked (GlcNAc...) asparagine). One can recognise an Ig-like C2-type domain in the interval 144–223 (PEIKVLNWTQ…PVSNRSWSFN (80 aa)). Cystine bridges form between Cys-158/Cys-228 and Cys-164/Cys-209. Residues 238-261 (WRLYAGLFLGGIVGVILIFEVVLL) traverse the membrane as a helical segment. Over 262-342 (LLRRRGKTNH…VYASVTFPES (81 aa)) the chain is Cytoplasmic. An ITSM 1 motif is present at residues 282-287 (TIYAQV). Phosphotyrosine; by FYN occurs at positions 284, 310, and 334. Positions 310 to 315 (YVAATE) match the SH2-binding motif. The short motif at 332 to 337 (TVYASV) is the ITSM 2 element.

Interacts (via cytoplasmic domain) with SH2D1A and SH2D1B; SH2D1A mediates association with FYN. Interacts (via cytoplasmic domain phosphorylated on tyrosine residues) with INPP5D and PTPN11; presence of SH2D1A facilitates binding to INPP5D. Interacts with MAP4K1. Interacts with PIK3C3, BECN1 and UVRAG; indicative for an association with PI3K complex II (PI3KC3-C2). Interacts with canine distemper virus HN protein; suggesting that it may serve as a receptor. Post-translationally, phosphorylated on tyrosine residues by FYN.

The protein resides in the cell membrane. Its function is as follows. Self-ligand receptor of the signaling lymphocytic activation molecule (SLAM) family. SLAM receptors triggered by homo- or heterotypic cell-cell interactions are modulating the activation and differentiation of a wide variety of immune cells and thus are involved in the regulation and interconnection of both innate and adaptive immune response. Activities are controlled by presence or absence of small cytoplasmic adapter proteins, SH2D1A/SAP and/or SH2D1B/EAT-2. SLAMF1-induced signal-transduction events in T-lymphocytes are different from those in B-cells. Two modes of SLAMF1 signaling seem to exist: one depending on SH2D1A (and perhaps SH2D1B) and another in which protein-tyrosine phosphatase 2C (PTPN11)-dependent signal transduction operates. Initially it has been proposed that association with SH2D1A prevents binding to inhibitory effectors including INPP5D/SHIP1 and PTPN11/SHP-2. However, signaling is also regulated by SH2D1A which can simultaneously interact with and recruit FYN which subsequently phosphorylates and activates SLAMF1. Mediates IL-2-independent proliferation of activated T cells during immune responses and induces IFN-gamma production. Downstreaming signaling involves INPP5D/SHIP1, DOK1 and DOK2 leading to inhibited IFN-gamma production in T-cells, and PRKCQ, BCL10 and NFKB1 leading to increased T-cell activation and Th2 cytokine production. Promotes T-cell receptor-induced IL-4 secretion by CD4(+) cells. Inhibits antigen receptor-mediated production of IFN-gamma, but not IL-2, in CD4(-)/CD8(-) T-cells. Required for IL-4 production by germinal centers T follicular helper (T(Fh))cells. May inhibit CD40-induced signal transduction in monocyte-derived dendritic cells. May play a role in allergic responses and may regulate allergen-induced Th2 cytokine and Th1 cytokine secretion. In conjunction with SLAMF6 controls the transition between positive selection and the subsequent expansion and differentiation of the thymocytic natural killer T (NKT) cell lineage. Involved in the peripheral differentiation of indifferent natural killer T (iNKT) cells toward a regulatory NKT2 type. In macrophages involved in down-regulation of IL-12, TNF-alpha and nitric oxide in response to lipopolysaccharide (LPS). In B-cells activates the ERK signaling pathway independently of SH2D1A but implicating both, SYK and INPP5D, and activates Akt signaling dependent on SYK and SH2D1A. In conjunction with SLAMF5 and SLAMF6 may be a negative regulator of the humoral immune response. The chain is Signaling lymphocytic activation molecule (SLAMF1) from Canis lupus familiaris (Dog).